The following is a 125-amino-acid chain: UPF0734 protein DDB_G0273871/DDB_G0273177 (125 aa).

This sequence belongs to the UPF0734 family.

The sequence is that of UPF0734 protein DDB_G0273871/DDB_G0273177 from Dictyostelium discoideum (Social amoeba).